A 368-amino-acid polypeptide reads, in one-letter code: Peptide chain release factor 2 (368 aa).

Position 250 is an N5-methylglutamine (Gln-250).

It belongs to the prokaryotic/mitochondrial release factor family. In terms of processing, methylated by PrmC. Methylation increases the termination efficiency of RF2.

Its subcellular location is the cytoplasm. Its function is as follows. Peptide chain release factor 2 directs the termination of translation in response to the peptide chain termination codons UGA and UAA. In Mycolicibacterium vanbaalenii (strain DSM 7251 / JCM 13017 / BCRC 16820 / KCTC 9966 / NRRL B-24157 / PYR-1) (Mycobacterium vanbaalenii), this protein is Peptide chain release factor 2.